Here is a 291-residue protein sequence, read N- to C-terminus: Tyrosine isonitrile desaturase (291 aa).

Fe cation is bound by residues histidine 110, aspartate 112, and histidine 259.

Belongs to the TfdA dioxygenase family. As to quaternary structure, homotrimer in solution. Requires Fe(2+) as cofactor.

It catalyses the reaction (2S)-3-(4-hydroxyphenyl)-2-isocyanopropanoate + 2-oxoglutarate + O2 = (2E)-3-(4-hydroxyphenyl)-2-isocyanoprop-2-enoate + succinate + CO2 + H2O. Involved in the biosynthesis of paerucumarin, a cyclized isocyano derivative of tyrosine. Catalyzes the 2-oxoglutarate-dependent oxidation of tyrosine isonitrile. This Pseudomonas aeruginosa (strain ATCC 15692 / DSM 22644 / CIP 104116 / JCM 14847 / LMG 12228 / 1C / PRS 101 / PAO1) protein is Tyrosine isonitrile desaturase.